We begin with the raw amino-acid sequence, 486 residues long: 3-dehydroshikimate dehydratase (486 aa).

The catalysed reaction is 3-dehydroshikimate = 3,4-dihydroxybenzoate + H2O. Its pathway is aromatic compound metabolism; 3,4-dihydroxybenzoate biosynthesis; 3,4-dihydroxybenzoate from 3-dehydroquinate: step 2/2. Converts dehydroshikimate to protocatechuate. This chain is 3-dehydroshikimate dehydratase (quiC), found in Acinetobacter baylyi (strain ATCC 33305 / BD413 / ADP1).